Here is a 132-residue protein sequence, read N- to C-terminus: Large ribosomal subunit protein uL14 (132 aa).

This sequence belongs to the universal ribosomal protein uL14 family. As to quaternary structure, part of the 50S ribosomal subunit. Forms a cluster with proteins L3 and L24e, part of which may contact the 16S rRNA in 2 intersubunit bridges.

Binds to 23S rRNA. Forms part of two intersubunit bridges in the 70S ribosome. The polypeptide is Large ribosomal subunit protein uL14 (Methanosphaera stadtmanae (strain ATCC 43021 / DSM 3091 / JCM 11832 / MCB-3)).